The primary structure comprises 633 residues: Laccase ARB_05828 (633 aa).

The first 16 residues, 1–16 (MKRLGLAALYIGSALA), serve as a signal peptide directing secretion. The propeptide occupies 22 to 47 (GPPSRNVPRDDFPMFNPLPSTDLNTR). An N-linked (GlcNAc...) asparagine glycan is attached at Asn143. Cu cation-binding residues include His148, His150, His192, and His194. Cys169 and Cys607 are joined by a disulfide. Positions 224–353 (LLMTDHLHSS…GRYWVRTTPA (130 aa)) constitute a Plastocyanin-like domain. N-linked (GlcNAc...) asparagine glycans are attached at residues Asn286 and Asn456. Cu cation is bound by residues His508, His511, His513, His568, Cys569, His570, and His574.

It belongs to the multicopper oxidase family. As to quaternary structure, monomer. Requires Cu cation as cofactor.

It is found in the secreted. It catalyses the reaction 4 hydroquinone + O2 = 4 benzosemiquinone + 2 H2O. The polypeptide is Laccase ARB_05828 (Arthroderma benhamiae (strain ATCC MYA-4681 / CBS 112371) (Trichophyton mentagrophytes)).